A 141-amino-acid chain; its full sequence is Large ribosomal subunit protein uL11 (141 aa).

It belongs to the universal ribosomal protein uL11 family. Part of the ribosomal stalk of the 50S ribosomal subunit. Interacts with L10 and the large rRNA to form the base of the stalk. L10 forms an elongated spine to which L12 dimers bind in a sequential fashion forming a multimeric L10(L12)X complex. Post-translationally, one or more lysine residues are methylated.

In terms of biological role, forms part of the ribosomal stalk which helps the ribosome interact with GTP-bound translation factors. The polypeptide is Large ribosomal subunit protein uL11 (Syntrophomonas wolfei subsp. wolfei (strain DSM 2245B / Goettingen)).